The following is a 366-amino-acid chain: tRNA/tmRNA (uracil-C(5))-methyltransferase (366 aa).

S-adenosyl-L-methionine is bound by residues Q190, Y218, N223, E239, and D299. C324 acts as the Nucleophile in catalysis. Residue E358 is the Proton acceptor of the active site.

Belongs to the class I-like SAM-binding methyltransferase superfamily. RNA M5U methyltransferase family. TrmA subfamily.

The catalysed reaction is uridine(54) in tRNA + S-adenosyl-L-methionine = 5-methyluridine(54) in tRNA + S-adenosyl-L-homocysteine + H(+). It catalyses the reaction uridine(341) in tmRNA + S-adenosyl-L-methionine = 5-methyluridine(341) in tmRNA + S-adenosyl-L-homocysteine + H(+). Its function is as follows. Dual-specificity methyltransferase that catalyzes the formation of 5-methyluridine at position 54 (m5U54) in all tRNAs, and that of position 341 (m5U341) in tmRNA (transfer-mRNA). This is tRNA/tmRNA (uracil-C(5))-methyltransferase from Salmonella choleraesuis (strain SC-B67).